Reading from the N-terminus, the 262-residue chain is MVAWRSAFLVCLAFSLATLVQRGSGDFDDFNLEDAVKETSSVKQPWDHTTTTTTNRPGTTRAPAKPPGSGLDLADALDDQDDGRRKPGIGGRERWNHVTTTTKRPVTTRAPANTLGNDFDLADALDDRNDRDDGRRKPIAGGGGFSDKDLEDIVGGGEYKPDKGKGDGRYGSNDDPGSGMVAEPGTIAGVASALAMALIGAVSSYISYQQKKFCFSIQQGLNADYVKGENLEAVVCEEPQVKYSTLHTQSAEPPPPPEPARI.

The first 25 residues, 1-25 (MVAWRSAFLVCLAFSLATLVQRGSG), serve as a signal peptide directing secretion. Over 26–185 (DFDDFNLEDA…PGSGMVAEPG (160 aa)) the chain is Extracellular. The segment at 38–181 (ETSSVKQPWD…SNDDPGSGMV (144 aa)) is disordered. 2 stretches are compositionally biased toward low complexity: residues 49 to 60 (TTTTTTNRPGTT) and 98 to 119 (VTTTTKRPVTTRAPANTLGNDF). Composition is skewed to basic and acidic residues over residues 125–136 (LDDRNDRDDGRR) and 159–168 (YKPDKGKGDG). A glycan (O-linked (Xyl...) (chondroitin sulfate) serine) is linked at Ser-178. A helical membrane pass occupies residues 186 to 206 (TIAGVASALAMALIGAVSSYI). Topologically, residues 207–262 (SYQQKKFCFSIQQGLNADYVKGENLEAVVCEEPQVKYSTLHTQSAEPPPPPEPARI) are cytoplasmic.

It belongs to the CD99 family. In terms of processing, O-glycosylated. Detected in cerebrospinal fluid (at protein level). Expressed in many tissues, with low expression in thymus.

It localises to the cell membrane. It is found in the cell junction. The protein resides in the secreted. Functionally, plays a role in a late step of leukocyte extravasation helping cells to overcome the endothelial basement membrane. Acts at the same site as, but independently of, PECAM1. Homophilic adhesion molecule, but these interactions may not be required for cell aggregation. The sequence is that of CD99 antigen-like protein 2 (CD99L2) from Homo sapiens (Human).